Reading from the N-terminus, the 253-residue chain is Triosephosphate isomerase (253 aa).

Residue 8–10 (NWK) coordinates substrate. H93 serves as the catalytic Electrophile. E165 serves as the catalytic Proton acceptor. Residues G171, S210, and 231–232 (GG) contribute to the substrate site.

It belongs to the triosephosphate isomerase family. As to quaternary structure, homodimer.

It localises to the cytoplasm. It carries out the reaction D-glyceraldehyde 3-phosphate = dihydroxyacetone phosphate. Its pathway is carbohydrate biosynthesis; gluconeogenesis. It participates in carbohydrate degradation; glycolysis; D-glyceraldehyde 3-phosphate from glycerone phosphate: step 1/1. Functionally, involved in the gluconeogenesis. Catalyzes stereospecifically the conversion of dihydroxyacetone phosphate (DHAP) to D-glyceraldehyde-3-phosphate (G3P). This is Triosephosphate isomerase from Francisella philomiragia subsp. philomiragia (strain ATCC 25017 / CCUG 19701 / FSC 153 / O#319-036).